Reading from the N-terminus, the 364-residue chain is NGLGLQNFPELKNDTFLRAAWGEETDYTPVWCMRQAGRYLPEFRETRAAQDFFSTCRSPEACCELTLEPVRRFPLDAAIIFSDILVVPQALAMEVTMVPGKGPSFPEPLREERDLERLRDPAAVASELGYVFQAITLTRQQLAGRVPLIGFAGAPWTLMTYMVEGGSFKTMAQAKRWLYQKPVASHKLLGILTHALVPYLIGQVAAGAQALQLFESHAGHLGSELFSKFALPYIRDVAKRVKAGLQKAGLTRMPMIIFAKDGHFALEELAQAGYEVVGLDWTVAPKKAREPVGKTVTLQGELDPCALYASEEEIGRLVQQMLNDFGPQRYIANLGHGLYPDMDPEHVGAFLDAVHKHSRLLRQN.

Coproporphyrinogen I is bound by residues Arg34, Ala36, Arg38, Arg47, Asp83, Tyr161, Ser216, and His336. Residues Arg34, Ala36, and Arg38 each coordinate coproporphyrinogen III. Asp83, Tyr161, Ser216, and His336 together coordinate coproporphyrinogen III.

The protein belongs to the uroporphyrinogen decarboxylase family. As to quaternary structure, homodimer.

Its subcellular location is the cytoplasm. It localises to the cytosol. It carries out the reaction uroporphyrinogen III + 4 H(+) = coproporphyrinogen III + 4 CO2. The catalysed reaction is uroporphyrinogen I + 4 H(+) = coproporphyrinogen I + 4 CO2. The protein operates within porphyrin-containing compound metabolism; protoporphyrin-IX biosynthesis; coproporphyrinogen-III from 5-aminolevulinate: step 4/4. Functionally, catalyzes the sequential decarboxylation of the four acetate side chains of uroporphyrinogen to form coproporphyrinogen and participates in the fifth step in the heme biosynthetic pathway. Isomer I or isomer III of uroporphyrinogen may serve as substrate, but only coproporphyrinogen III can ultimately be converted to heme. In vitro also decarboxylates pentacarboxylate porphyrinogen I. The polypeptide is Uroporphyrinogen decarboxylase (Rattus norvegicus (Rat)).